We begin with the raw amino-acid sequence, 145 residues long: Neuromedin-S (145 aa).

Positions 1 to 25 (MKYLAQFPSILAIYCFCLLQIPSSG) are cleaved as a signal peptide. Propeptides lie at residues 26–64 (FPRP…IYKR), 65–100 (FLFH…ADRR), and 101–103 (MKT). Asparagine 136 carries the asparagine amide modification. Residues 139 to 145 (NLDFDTW) constitute a propeptide that is removed on maturation.

It belongs to the NmU family.

Its subcellular location is the secreted. Functionally, implicated in the regulation of circadian rhythms through autocrine and/or paracrine actions. This Bos taurus (Bovine) protein is Neuromedin-S (NMS).